We begin with the raw amino-acid sequence, 447 residues long: BAG family molecular chaperone regulator 5 (447 aa).

BAG domains lie at 9–86 (SISR…EQNA), 95–167 (QNIF…EDCM), 182–260 (SVAK…DLEE), 275–350 (SIIK…DLKE), and 365–442 (PHKA…DMKS).

Binds to the ATPase domain of HSP/HSP70 chaperones. Binds PRKN. Interacts with HSPA8. Interacts with JPH2.

In terms of biological role, co-chaperone for HSP/HSP70 proteins. It functions as a nucleotide-exchange factor promoting the release of ADP from HSP70, thereby activating HSP70-mediated protein refolding. Has an essential role in maintaining proteostasis at junctional membrane complexes (JMC), where it may function as a scaffold between the HSPA8 chaperone and JMC proteins enabling correct, HSPA8-dependent JMC protein folding. Inhibits both auto-ubiquitination of PRKN and ubiquitination of target proteins by PRKN. This chain is BAG family molecular chaperone regulator 5 (Bag5), found in Mus musculus (Mouse).